The chain runs to 183 residues: Large ribosomal subunit protein uL5 (183 aa).

The protein belongs to the universal ribosomal protein uL5 family. Part of the 50S ribosomal subunit; part of the 5S rRNA/L5/L18/L25 subcomplex. Contacts the 5S rRNA and the P site tRNA. Forms a bridge to the 30S subunit in the 70S ribosome.

In terms of biological role, this is one of the proteins that bind and probably mediate the attachment of the 5S RNA into the large ribosomal subunit, where it forms part of the central protuberance. In the 70S ribosome it contacts protein S13 of the 30S subunit (bridge B1b), connecting the 2 subunits; this bridge is implicated in subunit movement. Contacts the P site tRNA; the 5S rRNA and some of its associated proteins might help stabilize positioning of ribosome-bound tRNAs. This is Large ribosomal subunit protein uL5 from Christiangramia forsetii (strain DSM 17595 / CGMCC 1.15422 / KT0803) (Gramella forsetii).